Consider the following 263-residue polypeptide: Undecaprenyl-diphosphatase 3 (263 aa).

8 helical membrane-spanning segments follow: residues 15 to 37 (GLTEFLPVSSTGHMILTGHLIGF), 42 to 62 (AKVFEVVIQLGSILAVVVIFW), 83 to 103 (LHIIIGMIPAGVLGVLFHSAI), 106 to 126 (VLFGPGPVVISLVAGGILMIV), 142 to 162 (ITYKQAFTIGMFQCLALWPGF), 183 to 203 (AEYTFILAVPMMVAASGLDLI), 216 to 236 (LFATGFITAFVVAMLAIVSFL), and 242 to 262 (VKLTPFAYYRFILAAVFYFFI).

Belongs to the UppP family.

Its subcellular location is the cell membrane. It carries out the reaction di-trans,octa-cis-undecaprenyl diphosphate + H2O = di-trans,octa-cis-undecaprenyl phosphate + phosphate + H(+). Catalyzes the dephosphorylation of undecaprenyl diphosphate (UPP). Confers resistance to bacitracin. This chain is Undecaprenyl-diphosphatase 3, found in Bacillus thuringiensis subsp. konkukian (strain 97-27).